The primary structure comprises 933 residues: Isoleucine--tRNA ligase (933 aa).

Residues P57 to H67 carry the 'HIGH' region motif. Residue E554 coordinates L-isoleucyl-5'-AMP. A 'KMSKS' region motif is present at residues K595–S599. K598 contributes to the ATP binding site.

Belongs to the class-I aminoacyl-tRNA synthetase family. IleS type 1 subfamily. Monomer.

The protein resides in the cytoplasm. The catalysed reaction is tRNA(Ile) + L-isoleucine + ATP = L-isoleucyl-tRNA(Ile) + AMP + diphosphate. Functionally, catalyzes the attachment of isoleucine to tRNA(Ile). As IleRS can inadvertently accommodate and process structurally similar amino acids such as valine, to avoid such errors it has two additional distinct tRNA(Ile)-dependent editing activities. One activity is designated as 'pretransfer' editing and involves the hydrolysis of activated Val-AMP. The other activity is designated 'posttransfer' editing and involves deacylation of mischarged Val-tRNA(Ile). This is Isoleucine--tRNA ligase from Streptococcus pyogenes serotype M18 (strain MGAS8232).